A 152-amino-acid polypeptide reads, in one-letter code: Avidin (152 aa).

The first 24 residues, 1–24 (MVHATSPLLLLLLLSLALVAPGLS), serve as a signal peptide directing secretion. The region spanning 26–149 (RKCSLTGKWT…GINIFTRLRT (124 aa)) is the Avidin-like domain. A disulfide bond links cysteine 28 and cysteine 107. Asparagine 41 carries an N-linked (GlcNAc...) asparagine glycan. Biotin is bound at residue tyrosine 57.

This sequence belongs to the avidin/streptavidin family. As to quaternary structure, homotetramer. N-linked glycan at Asn-41 consists of GlcNAc(beta1-2)Man(alpha1-3)[GlcNAc(beta1-4)][Man(alpha1-?)Man(alpha1-6)] Man(beta1-4)GlcNAc(beta1-4)GlcNAc. As to expression, synthesized in hen oviduct and concentrated in egg white (where it represents 0.05% of the total protein).

It is found in the secreted. The biological function of avidin is not known. Forms a strong non-covalent specific complex with biotin (one molecule of biotin per subunit of avidin). The chain is Avidin (AVD) from Gallus gallus (Chicken).